A 513-amino-acid chain; its full sequence is Histidine ammonia-lyase (513 aa).

Positions 144–146 form a cross-link, 5-imidazolinone (Ala-Gly); the sequence is ASG. A 2,3-didehydroalanine (Ser) modification is found at serine 145.

The protein belongs to the PAL/histidase family. Post-translationally, contains an active site 4-methylidene-imidazol-5-one (MIO), which is formed autocatalytically by cyclization and dehydration of residues Ala-Ser-Gly.

Its subcellular location is the cytoplasm. It catalyses the reaction L-histidine = trans-urocanate + NH4(+). The protein operates within amino-acid degradation; L-histidine degradation into L-glutamate; N-formimidoyl-L-glutamate from L-histidine: step 1/3. This chain is Histidine ammonia-lyase, found in Streptococcus gordonii (strain Challis / ATCC 35105 / BCRC 15272 / CH1 / DL1 / V288).